A 987-amino-acid polypeptide reads, in one-letter code: Voltage-gated delayed rectifier potassium channel KCNH1 (987 aa).

At 1–220 (MTMAGGRKGL…LHYCVFKTTW (220 aa)) the chain is on the cytoplasmic side. A PAS domain is found at 14–94 (QNTFLENIVR…QTFENYEMNS (81 aa)). In terms of domain architecture, PAC spans 93-145 (NSFEILMYKKNRTPVWFFVKIAPIRNEQDKVVLFLCTFSDITAFKQPIEDDSC). Residues 151–162 (FARLTRALTSSR) form a required for phosphatidylinositol bisphosphate binding region. The chain crosses the membrane as a helical span at residues 221-241 (DWIILILTFYTAILVPYNVSF). The Extracellular segment spans residues 242 to 248 (KTRQNNV). The helical transmembrane segment at 249-269 (AWLVVDSIVDVIFLVDIVLNF) threads the bilayer. The Cytoplasmic portion of the chain corresponds to 270-290 (HTTFVGPAGEVISDPKLIRMN). The chain crosses the membrane as a helical span at residues 291-309 (YLKTWFVIDLLSCLPYDVI). Topologically, residues 310 to 345 (NAFENVDEVSAFMGDPGKIGFADQIPPPLEGRESQG) are extracellular. The chain crosses the membrane as a helical; Voltage-sensor span at residues 346–368 (ISSLFSSLKVVRLLRLGRVARKL). Over 369–377 (DHYIEYGAA) the chain is Cytoplasmic. Residues 378–399 (VLVLLVCVFGLAAHWMACIWYS) traverse the membrane as a helical segment. At 400–448 (IGDYEIFDEDTKTIRNNSWLYQLAMDIGTPYQFNGSGSGKWEGGPSKNS) the chain is on the extracellular side. 2 N-linked (GlcNAc...) asparagine glycosylation sites follow: asparagine 415 and asparagine 433. Positions 449–470 (VYISSLYFTMTSLTSVGFGNIA) form an intramembrane region, pore-forming. A Selectivity filter motif is present at residues 463-468 (SVGFGN). The Extracellular segment spans residues 471–477 (PSTDIEK). Residues 478-498 (IFAVAIMMIGSLLYATIFGNV) form a helical membrane-spanning segment. Residues 499–987 (TTIFQQMYAN…ESERDIFGAS (489 aa)) are Cytoplasmic-facing. Residues 673–770 (KRDALQKVLE…LDDLDVEKGS (98 aa)) are calmodulin-binding. The segment at 699–701 (YNL) is interaction with cyclic nucleotide-binding pocket. The tract at residues 922–962 (AAVLEVKHELKEDIKALSTKMTSIEKQLSEILRILTSRRSS) is CAD (involved in subunit assembly). A disordered region spans residues 960–987 (RSSQSPQELFEISRPQSPESERDIFGAS). Residues serine 972, serine 976, and serine 979 each carry the phosphoserine modification. The span at 978-987 (ESERDIFGAS) shows a compositional bias: basic and acidic residues.

The protein belongs to the potassium channel family. H (Eag) (TC 1.A.1.20) subfamily. Kv10.1/KCNH1 sub-subfamily. Homomultimer. The potassium channel is composed of a homo- or heterotetrameric complex of pore-forming alpha subunits that can associate with modulating beta subunits. Heteromultimer with KCNH5/EAG2. Interacts with ALG10B. Interacts with RABEP1. Interacts (via C-terminus) with CTTN. Interacts (via C-terminal cytoplasmic region) with Ca(2+)-bound calmodulin. In terms of processing, channel activity is regulated via tyrosine phosphorylation/dephosphorylation by SRC and PTPN6. Detected in cerebellum, cortex and retina.

It localises to the cell membrane. Its subcellular location is the nucleus inner membrane. It is found in the cell projection. The protein resides in the dendrite. The protein localises to the axon. It localises to the presynaptic cell membrane. Its subcellular location is the perikaryon. It is found in the postsynaptic density membrane. The protein resides in the early endosome membrane. It carries out the reaction K(+)(in) = K(+)(out). With respect to regulation, channel activity is inhibited by interaction with Ca(2+)-bound calmodulin. Interaction of a single pore-forming alpha subunit with a calmodulin chain is sufficient to promote channel closure. Extracellular magnesium ion concentrations up to 4 mM modulate channel activity by slowing down current activation in a reversible fashion. Channel activity is not regulated by cyclic nucleotides. Channel activity is inhibited by binding intracellular phosphatidylinositol-3,5-bisphosphate and phosphatidylinositol-4,5-bisphosphate (PIP2), but is not inhibited by phosphatidylinositol 4-phosphate. Its function is as follows. Pore-forming (alpha) subunit of a voltage-gated delayed rectifier potassium channel that mediates outward-rectifying potassium currents which, on depolarization, reaches a steady-state level and do not inactivate. The activation kinetics depend on the prepulse potential and external divalent cation concentration. With negative prepulses, the current activation is delayed and slowed down several fold, whereas more positive prepulses speed up activation. The time course of activation is biphasic with a fast and a slowly activating current component. Activates at more positive membrane potentials and exhibit a steeper activation curve. Channel properties are modulated by subunit assembly. Mediates IK(NI) current in myoblasts. Involved in the regulation of cell proliferation and differentiation, in particular adipogenic and osteogenic differentiation in bone marrow-derived mesenchymal stem cells (MSCs). The polypeptide is Voltage-gated delayed rectifier potassium channel KCNH1 (Bos taurus (Bovine)).